The chain runs to 359 residues: Dual-specificity RNA methyltransferase RlmN (359 aa).

The active-site Proton acceptor is Glu86. The region spanning 105-338 (EGEKYTICVS…CTIRESKGID (234 aa)) is the Radical SAM core domain. An intrachain disulfide couples Cys112 to Cys343. Residues Cys119, Cys123, and Cys126 each coordinate [4Fe-4S] cluster. Residues 169 to 170 (GE), Ser201, 224 to 226 (SLH), and Asn300 contribute to the S-adenosyl-L-methionine site. Residue Cys343 is the S-methylcysteine intermediate of the active site.

Belongs to the radical SAM superfamily. RlmN family. [4Fe-4S] cluster is required as a cofactor.

The protein localises to the cytoplasm. It carries out the reaction adenosine(2503) in 23S rRNA + 2 reduced [2Fe-2S]-[ferredoxin] + 2 S-adenosyl-L-methionine = 2-methyladenosine(2503) in 23S rRNA + 5'-deoxyadenosine + L-methionine + 2 oxidized [2Fe-2S]-[ferredoxin] + S-adenosyl-L-homocysteine. The enzyme catalyses adenosine(37) in tRNA + 2 reduced [2Fe-2S]-[ferredoxin] + 2 S-adenosyl-L-methionine = 2-methyladenosine(37) in tRNA + 5'-deoxyadenosine + L-methionine + 2 oxidized [2Fe-2S]-[ferredoxin] + S-adenosyl-L-homocysteine. Functionally, specifically methylates position 2 of adenine 2503 in 23S rRNA and position 2 of adenine 37 in tRNAs. m2A2503 modification seems to play a crucial role in the proofreading step occurring at the peptidyl transferase center and thus would serve to optimize ribosomal fidelity. This Wolinella succinogenes (strain ATCC 29543 / DSM 1740 / CCUG 13145 / JCM 31913 / LMG 7466 / NCTC 11488 / FDC 602W) (Vibrio succinogenes) protein is Dual-specificity RNA methyltransferase RlmN.